A 272-amino-acid chain; its full sequence is Phosphate import ATP-binding protein PstB 1 (272 aa).

Residues 26–267 (LEIRNLDLRY…PKKRKTEDYI (242 aa)) enclose the ABC transporter domain. 58–65 (GPSGCGKS) is an ATP binding site.

This sequence belongs to the ABC transporter superfamily. Phosphate importer (TC 3.A.1.7) family. As to quaternary structure, the complex is composed of two ATP-binding proteins (PstB), two transmembrane proteins (PstC and PstA) and a solute-binding protein (PstS).

The protein resides in the cell inner membrane. It catalyses the reaction phosphate(out) + ATP + H2O = ADP + 2 phosphate(in) + H(+). Functionally, part of the ABC transporter complex PstSACB involved in phosphate import. Responsible for energy coupling to the transport system. The chain is Phosphate import ATP-binding protein PstB 1 from Shewanella oneidensis (strain ATCC 700550 / JCM 31522 / CIP 106686 / LMG 19005 / NCIMB 14063 / MR-1).